The sequence spans 769 residues: 5-methyltetrahydropteroyltriglutamate--homocysteine methyltransferase (769 aa).

Residues R16–K19 and K121 each bind 5-methyltetrahydropteroyltri-L-glutamate. Residues S415–T450 are disordered. Positions L439–Q449 are enriched in polar residues. L-homocysteine-binding positions include I444–S446 and E497. L-methionine is bound by residues I444–S446 and E497. 5-methyltetrahydropteroyltri-L-glutamate contacts are provided by residues R528 to C529 and W574. D612 contributes to the L-homocysteine binding site. Position 612 (D612) interacts with L-methionine. Residue E618 coordinates 5-methyltetrahydropteroyltri-L-glutamate. 3 residues coordinate Zn(2+): H654, C656, and E678. The active-site Proton donor is the H707. Position 739 (C739) interacts with Zn(2+).

This sequence belongs to the vitamin-B12 independent methionine synthase family. It depends on Zn(2+) as a cofactor.

The catalysed reaction is 5-methyltetrahydropteroyltri-L-glutamate + L-homocysteine = tetrahydropteroyltri-L-glutamate + L-methionine. It participates in amino-acid biosynthesis; L-methionine biosynthesis via de novo pathway; L-methionine from L-homocysteine (MetE route): step 1/1. Its function is as follows. Catalyzes the transfer of a methyl group from 5-methyltetrahydrofolate to homocysteine resulting in methionine formation. In Salinibacter ruber (strain DSM 13855 / M31), this protein is 5-methyltetrahydropteroyltriglutamate--homocysteine methyltransferase.